We begin with the raw amino-acid sequence, 571 residues long: Proline--tRNA ligase (571 aa).

The protein belongs to the class-II aminoacyl-tRNA synthetase family. ProS type 1 subfamily. In terms of assembly, homodimer.

It localises to the cytoplasm. It carries out the reaction tRNA(Pro) + L-proline + ATP = L-prolyl-tRNA(Pro) + AMP + diphosphate. Catalyzes the attachment of proline to tRNA(Pro) in a two-step reaction: proline is first activated by ATP to form Pro-AMP and then transferred to the acceptor end of tRNA(Pro). As ProRS can inadvertently accommodate and process non-cognate amino acids such as alanine and cysteine, to avoid such errors it has two additional distinct editing activities against alanine. One activity is designated as 'pretransfer' editing and involves the tRNA(Pro)-independent hydrolysis of activated Ala-AMP. The other activity is designated 'posttransfer' editing and involves deacylation of mischarged Ala-tRNA(Pro). The misacylated Cys-tRNA(Pro) is not edited by ProRS. This is Proline--tRNA ligase from Stutzerimonas stutzeri (strain A1501) (Pseudomonas stutzeri).